A 240-amino-acid polypeptide reads, in one-letter code: Ribonuclease HII (240 aa).

Positions 31–222 (RLIAGVDEAG…VRRALGLETA (192 aa)) constitute an RNase H type-2 domain. 3 residues coordinate a divalent metal cation: Asp-37, Glu-38, and Asp-130.

Belongs to the RNase HII family. The cofactor is Mn(2+). Requires Mg(2+) as cofactor.

It localises to the cytoplasm. It catalyses the reaction Endonucleolytic cleavage to 5'-phosphomonoester.. Its function is as follows. Endonuclease that specifically degrades the RNA of RNA-DNA hybrids. In Xanthomonas campestris pv. campestris (strain 8004), this protein is Ribonuclease HII.